Here is a 667-residue protein sequence, read N- to C-terminus: Probable sulfate permease C320.05 (667 aa).

The disordered stretch occupies residues 1–27 (MSSPSENHLLGPKTSFIDNRTSTSRPL). The span at 16–25 (FIDNRTSTSR) shows a compositional bias: polar residues. 12 consecutive transmembrane segments (helical) span residues 77 to 97 (IIWD…IALS), 102 to 122 (FLGV…ILYC), 162 to 182 (ILVT…AGLF), 198 to 218 (GCIL…FFGF), 240 to 260 (MSKA…LLIG), 275 to 295 (IVSI…SKKF), 301 to 321 (YGIA…LPLP), 336 to 356 (GVMC…AISL), 368 to 388 (LISL…PICG), 405 to 425 (VATI…MPVF), 433 to 453 (LASM…VEIF), and 465 to 485 (GIIF…GIIF). In terms of domain architecture, STAS spans 532–657 (SSTAVESAPR…DHVQDSIKKV (126 aa)).

This sequence belongs to the SLC26A/SulP transporter (TC 2.A.53) family.

The protein resides in the endoplasmic reticulum membrane. Its function is as follows. Possible sulfate transporter. In Schizosaccharomyces pombe (strain 972 / ATCC 24843) (Fission yeast), this protein is Probable sulfate permease C320.05.